We begin with the raw amino-acid sequence, 114 residues long: Putative antiporter subunit mnhC2 (114 aa).

Transmembrane regions (helical) follow at residues 3 to 23 (LILL…ILSI), 25 to 45 (LIRI…IIMS), and 72 to 92 (AIVL…LVLI).

Belongs to the CPA3 antiporters (TC 2.A.63) subunit C family. May form a heterooligomeric complex that consists of seven subunits: mnhA2, mnhB2, mnhC2, mnhD2, mnhE2, mnhF2 and mnhG2.

Its subcellular location is the cell membrane. This Staphylococcus epidermidis (strain ATCC 12228 / FDA PCI 1200) protein is Putative antiporter subunit mnhC2 (mnhC2).